The sequence spans 342 residues: NLP effector protein Pc107869 (342 aa).

Positions 1-19 (MKTGFFLFAACAALVAVQA) are cleaved as a signal peptide. The N-linked (GlcNAc...) asparagine glycan is linked to Asn-24. Positions 41–125 (APRTKAPPTK…PTPDPGPWEA (85 aa)) are disordered. Positions 55–75 (QQSSLSGSQEQQQEQIETPAP) are enriched in low complexity. Pro residues predominate over residues 93–121 (TPAPTPAPTPAPTPAPTPAPTPAPTPDPG). The Hepta-peptide GHRHDWE motif motif lies at 226–232 (GHRHDWE).

The protein belongs to the Necrosis inducing protein (NPP1) family.

It localises to the secreted. Secreted effector that contributes strongly to virulence during infection by P.capsici. Induces cell death in the Solanaceae, including Nicotiana benthamiana. The protein is NLP effector protein Pc107869 of Phytophthora capsici.